The chain runs to 795 residues: Phenylalanine--tRNA ligase beta subunit (795 aa).

Positions 39 to 148 (AAEFNGVVIG…LDAPLGTDLR (110 aa)) constitute a tRNA-binding domain. The region spanning 401–476 (PKPAQILLRR…RIYGYNNIPN (76 aa)) is the B5 domain. 4 residues coordinate Mg(2+): aspartate 454, aspartate 460, glutamate 463, and glutamate 464. In terms of domain architecture, FDX-ACB spans 701–794 (SKFPANRRDI…LKTEFNASLR (94 aa)).

It belongs to the phenylalanyl-tRNA synthetase beta subunit family. Type 1 subfamily. In terms of assembly, tetramer of two alpha and two beta subunits. The cofactor is Mg(2+).

It localises to the cytoplasm. The catalysed reaction is tRNA(Phe) + L-phenylalanine + ATP = L-phenylalanyl-tRNA(Phe) + AMP + diphosphate + H(+). This chain is Phenylalanine--tRNA ligase beta subunit, found in Shewanella oneidensis (strain ATCC 700550 / JCM 31522 / CIP 106686 / LMG 19005 / NCIMB 14063 / MR-1).